The chain runs to 241 residues: Small ribosomal subunit protein uS2 (241 aa).

The protein belongs to the universal ribosomal protein uS2 family.

The polypeptide is Small ribosomal subunit protein uS2 (Escherichia coli O127:H6 (strain E2348/69 / EPEC)).